The sequence spans 1532 residues: Glycogen debranching enzyme (1532 aa).

Serine 64 carries the post-translational modification Phosphoserine. Catalysis depends on residues aspartate 526, histidine 529, and aspartate 627.

The protein belongs to the glycogen debranching enzyme family. In terms of assembly, monomer. Interacts with NHLRC1/malin. In terms of processing, the N-terminus is blocked. Post-translationally, ubiquitinated. As to expression, liver, kidney and lymphoblastoid cells express predominantly isoform 1; whereas muscle and heart express not only isoform 1, but also muscle-specific isoform mRNAs (isoforms 2, 3 and 4). Isoforms 5 and 6 are present in both liver and muscle.

The protein localises to the cytoplasm. It catalyses the reaction Transfers a segment of a (1-&gt;4)-alpha-D-glucan to a new position in an acceptor, which may be glucose or a (1-&gt;4)-alpha-D-glucan.. The enzyme catalyses Hydrolysis of (1-&gt;6)-alpha-D-glucosidic branch linkages in glycogen phosphorylase limit dextrin.. In terms of biological role, multifunctional enzyme acting as 1,4-alpha-D-glucan:1,4-alpha-D-glucan 4-alpha-D-glycosyltransferase and amylo-1,6-glucosidase in glycogen degradation. This Homo sapiens (Human) protein is Glycogen debranching enzyme (AGL).